The chain runs to 394 residues: Choline/ethanolamine kinase (394 aa).

The segment at methionine 1–serine 42 is disordered. An N-acetylalanine modification is found at alanine 2. Over residues glycine 7–proline 19 the composition is skewed to gly residues. ATP-binding positions include serine 75–leucine 81, arginine 104, glutamine 146–proline 152, glutamine 244, and aspartate 264. Glycine 77–serine 79 is a binding site for substrate.

This sequence belongs to the choline/ethanolamine kinase family. Homodimer, and heterodimer with CHKA. In terms of tissue distribution, expressed ubiquitously with the highest level in testis.

The enzyme catalyses choline + ATP = phosphocholine + ADP + H(+). The catalysed reaction is ethanolamine + ATP = phosphoethanolamine + ADP + H(+). It participates in phospholipid metabolism; phosphatidylethanolamine biosynthesis; phosphatidylethanolamine from ethanolamine: step 1/3. Functionally, has a key role in phospholipid metabolism, and catalyzes the first step of phosphatidylethanolamine and phosphatidylcholine biosynthesis. This chain is Choline/ethanolamine kinase (Chkb), found in Mus musculus (Mouse).